We begin with the raw amino-acid sequence, 301 residues long: MRHWRRKAMLATLPVIRDKSVRTPWREFWRRFLRQHVAVAAGLFVLLLIAIAFWAQYLMPYDAENYFDYDRLNEGPSSAHWLGVDSLGRDIFSRILMGTRISLAAGIFSVLVGMMIGTTLGLLAGYYEGWADRIIMRICDVLFAFPGILLAIAVVAIMGSGMANVVVAVAIFSIPAFARLVRGNTLVLKQLTYIESARSMGANDWTILFRHILPGSVSSIVVFFSMRIGMSIITAASLSFLGLGAQPPMPEWGAMLNEARSDMVIAPHVAIFPSLAIFLTVLAFNLLGDGLRDALDPKLKS.

The next 6 helical transmembrane spans lie at 37–57 (VAVA…WAQY), 103–123 (LAAG…LGLL), 141–161 (VLFA…MGSG), 162–182 (MANV…RLVR), 220–240 (IVVF…SLSF), and 264–284 (VIAP…VLAF). The 190-residue stretch at 99-288 (TRISLAAGIF…LTVLAFNLLG (190 aa)) folds into the ABC transmembrane type-1 domain.

Belongs to the binding-protein-dependent transport system permease family. As to quaternary structure, the complex is composed of two ATP-binding proteins (GsiA), two transmembrane proteins (GsiC and GsiD) and a solute-binding protein (GsiB).

Its subcellular location is the cell inner membrane. Its function is as follows. Part of the ABC transporter complex GsiABCD involved in glutathione import. Probably responsible for the translocation of the substrate across the membrane. In Pectobacterium atrosepticum (strain SCRI 1043 / ATCC BAA-672) (Erwinia carotovora subsp. atroseptica), this protein is Glutathione transport system permease protein GsiD.